Reading from the N-terminus, the 464-residue chain is Fumarate hydratase class II (464 aa).

Residues 96–98 (SGT), 127–130 (HPND), 137–139 (SSN), and T185 contribute to the substrate site. Catalysis depends on H186, which acts as the Proton donor/acceptor. The active site involves S316. Residues S317 and 322 to 324 (KVN) contribute to the substrate site.

This sequence belongs to the class-II fumarase/aspartase family. Fumarase subfamily. As to quaternary structure, homotetramer.

It localises to the cytoplasm. It carries out the reaction (S)-malate = fumarate + H2O. The protein operates within carbohydrate metabolism; tricarboxylic acid cycle; (S)-malate from fumarate: step 1/1. In terms of biological role, involved in the TCA cycle. Catalyzes the stereospecific interconversion of fumarate to L-malate. The chain is Fumarate hydratase class II from Pseudomonas putida (strain ATCC 47054 / DSM 6125 / CFBP 8728 / NCIMB 11950 / KT2440).